The chain runs to 192 residues: Putative integrase/recombinase y4gC (192 aa).

In terms of domain architecture, Tyr recombinase spans 1-183; sequence MPSILERDQI…ATEDLRAIAL (183 aa). Residues R41, K66, H135, R138, and H161 contribute to the active site. Catalysis depends on Y170, which acts as the O-(3'-phospho-DNA)-tyrosine intermediate.

This sequence belongs to the 'phage' integrase family.

This chain is Putative integrase/recombinase y4gC, found in Sinorhizobium fredii (strain NBRC 101917 / NGR234).